The primary structure comprises 492 residues: MATGRAKNTKWARWLSTAGLIIVVTLPATTMAAERTGLKATAWKPLCKLTTELSKVSGEMLNKGQEVISNIQKIKAAEYKVSIYLAKNPETQALQQSTLLRGYFARKTNGGLESYKTMGLATQIRSARAAAYLKGSIDEFLNLLESLKGGSENKCLVTTNADTAATRRETKLDDQECALSMPETKPEAATRTELTQTGYPNLQHGGGGTANTFQPTTSTGTCKLLSGHSTNGYPTTSALDTTAKVLAGYMTIPNTQVEATLANMQAMGNGHKATAPAWHEAWEARNREAKAKDLAYTNETGNLDTQPTLKALVKTLLLPKDNTEHNAEATKLEALFGGLAADKTKTYLDMVDAEIIPAGIAGRTTEAPLGKIHDTVELGDILSNYEMIAAQNVVTLKKNLDAVSKKQQTESAENKEKICNAAKDNQKACENLKEKGCVFNTESNKCELKKDVKEKLEKESKETEGKDEKANTTGSNSFLIHKAPLLLAFLLF.

The N-terminal stretch at 1 to 32 (MATGRAKNTKWARWLSTAGLIIVVTLPATTMA) is a signal peptide. Cystine bridges form between Cys-47–Cys-177 and Cys-155–Cys-222. Residues Asn-298 and Asn-471 are each glycosylated (N-linked (GlcNAc...) asparagine). Residue Ser-475 is the site of GPI-anchor amidated serine attachment. A propeptide spans 476-492 (NSFLIHKAPLLLAFLLF) (removed in mature form).

The protein resides in the cell membrane. VSG forms a coat on the surface of the parasite. The trypanosome evades the immune response of the host by expressing a series of antigenically distinct VSGs from an estimated 1000 VSG genes. This Trypanosoma brucei brucei protein is Variant surface glycoprotein MITAT 1.1.